A 310-amino-acid chain; its full sequence is Quinolinate synthase (310 aa).

H27 and S44 together coordinate iminosuccinate. Position 89 (C89) interacts with [4Fe-4S] cluster. Residues 115–117 and S132 contribute to the iminosuccinate site; that span reads YVN. C175 contributes to the [4Fe-4S] cluster binding site. Residues 201 to 203 and T222 contribute to the iminosuccinate site; that span reads HPE. C267 is a binding site for [4Fe-4S] cluster.

Belongs to the quinolinate synthase family. Type 2 subfamily. [4Fe-4S] cluster is required as a cofactor.

Its subcellular location is the cytoplasm. The enzyme catalyses iminosuccinate + dihydroxyacetone phosphate = quinolinate + phosphate + 2 H2O + H(+). The protein operates within cofactor biosynthesis; NAD(+) biosynthesis; quinolinate from iminoaspartate: step 1/1. In terms of biological role, catalyzes the condensation of iminoaspartate with dihydroxyacetone phosphate to form quinolinate. In Thermus thermophilus (strain ATCC BAA-163 / DSM 7039 / HB27), this protein is Quinolinate synthase.